Consider the following 584-residue polypeptide: Pectinesterase 3 (584 aa).

The first 50 residues, M1–G50, serve as a signal peptide directing secretion. Residues V51–Q266 constitute a propeptide that is removed on maturation. 3 N-linked (GlcNAc...) asparagine glycosylation sites follow: N108, N129, and N226. The substrate site is built by T348 and Q378. D401 functions as the Proton donor in the catalytic mechanism. C415 and C435 are joined by a disulfide. The Nucleophile role is filled by D422. Residues R490 and W492 each coordinate substrate.

It in the N-terminal section; belongs to the PMEI family. This sequence in the C-terminal section; belongs to the pectinesterase family. As to expression, in the peel, expression is localized to the region of the flavedo close to the oil glands, and to the innermost layer of the albedo. In the lamella, expression is localized to the cell layers opposing the fruit tissue, and to the parenchyma surrounding the vascular tissue. In the fruit vesicles, expression is restricted to the peripheral cell layers and stalk cells. High levels of expression are detected in the core matrix.

It localises to the secreted. It is found in the cell wall. The enzyme catalyses [(1-&gt;4)-alpha-D-galacturonosyl methyl ester](n) + n H2O = [(1-&gt;4)-alpha-D-galacturonosyl](n) + n methanol + n H(+). Its pathway is glycan metabolism; pectin degradation; 2-dehydro-3-deoxy-D-gluconate from pectin: step 1/5. Functionally, acts in the modification of cell walls via demethylesterification of cell wall pectin. This chain is Pectinesterase 3, found in Citrus sinensis (Sweet orange).